The sequence spans 466 residues: GTPase Der (466 aa).

2 EngA-type G domains span residues 30-193 and 203-376; these read PVVA…PEVS and RRVA…ASWD. Residues 36–43, 83–87, 145–148, 209–216, 256–260, and 321–324 contribute to the GTP site; these read GRPNVGKS, DTGGW, NKVD, GKPNVGKS, DTAGL, and NKWD. Residues 377–459 form the KH-like domain; it reads TRIATGPLNS…PIRINVRVRE (83 aa).

The protein belongs to the TRAFAC class TrmE-Era-EngA-EngB-Septin-like GTPase superfamily. EngA (Der) GTPase family. In terms of assembly, associates with the 50S ribosomal subunit.

Its function is as follows. GTPase that plays an essential role in the late steps of ribosome biogenesis. In Mycobacterium avium (strain 104), this protein is GTPase Der.